Here is a 482-residue protein sequence, read N- to C-terminus: uncharacterized protein (482 aa).

2 WD repeats span residues 92–133 (DMPN…REPI) and 191–230 (GHEHNIPCITFNSSGTLLLSGSIDRSLQIWDITSLSCLCK).

Its subcellular location is the cytoplasm. The protein resides in the nucleus. This is an uncharacterized protein from Schizosaccharomyces pombe (strain 972 / ATCC 24843) (Fission yeast).